The sequence spans 538 residues: Mitochondria-eating protein (538 aa).

Residues 1-273 are interaction with YWHAG/14-3-3 protein gamma; sequence MAENLKRLVS…PRSRSCSRSR (273 aa). Position 85 is a phosphoserine (Ser85). The disordered stretch occupies residues 97–137; the sequence is SKVPSLQDTFDRERHKDPSPRDRDMQQLDSNLNSTRSQCNQ. A compositionally biased stretch (basic and acidic residues) spans 105–122; it reads TFDRERHKDPSPRDRDMQ. Coiled-coil stretches lie at residues 118 to 187 and 219 to 256; these read DRDM…RHRN and DQQD…RSSR. Residues 123-137 are compositionally biased toward polar residues; it reads QLDSNLNSTRSQCNQ. Phosphoserine is present on residues Ser156 and Ser159. Disordered regions lie at residues 173 to 226 and 247 to 294; these read QLKS…TEAM and KSAL…SKLS. The segment covering 181–210 has biased composition (basic and acidic residues); the sequence is EDARHRNTDQRSSENRRSEPWSLEERKREQ. Residues 211 to 224 show a composition bias toward polar residues; sequence WNSLKQNADQQDTE. Residues 253–278 show a composition bias toward low complexity; it reads RSSRSRSPSPAPRSRSCSRSRSASPS. Residues Ser287 and Ser509 each carry the phosphoserine modification.

It belongs to the MIEAP family. In terms of assembly, interacts (via coiled-coil domains) with BNIP3L (via BH3 domain). Interacts (via coiled-coil domains) with BNIP3 (via BH3 domain). Interacts with YWHAG/14-3-3 protein gamma; a protein that also plays a role in MALM.

The protein resides in the cytoplasm. It localises to the cytosol. Its subcellular location is the mitochondrion outer membrane. It is found in the mitochondrion matrix. Functionally, key regulator of mitochondrial quality that mediates the repairing or degradation of unhealthy mitochondria in response to mitochondrial damage. Mediator of mitochondrial protein catabolic process (also named MALM) by mediating the degradation of damaged proteins inside mitochondria by promoting the accumulation in the mitochondrial matrix of hydrolases that are characteristic of the lysosomal lumen. Also involved in mitochondrion degradation of damaged mitochondria by promoting the formation of vacuole-like structures (named MIV), which engulf and degrade unhealthy mitochondria by accumulating lysosomes. The physical interaction of SPATA18/MIEAP, BNIP3 and BNIP3L/NIX at the mitochondrial outer membrane regulates the opening of a pore in the mitochondrial double membrane in order to mediate the translocation of lysosomal proteins from the cytoplasm to the mitochondrial matrix. Binds cardiolipin. May form molecular condensates (non-membrane-bounded organelles) within mitochondria that compartmentalize and promote cardiolipin metabolism. The protein is Mitochondria-eating protein (SPATA18) of Homo sapiens (Human).